A 357-amino-acid chain; its full sequence is Peptide chain release factor 1 (357 aa).

N5-methylglutamine is present on glutamine 233.

Belongs to the prokaryotic/mitochondrial release factor family. In terms of processing, methylated by PrmC. Methylation increases the termination efficiency of RF1.

The protein resides in the cytoplasm. Functionally, peptide chain release factor 1 directs the termination of translation in response to the peptide chain termination codons UAG and UAA. This Enterococcus faecalis (strain ATCC 700802 / V583) protein is Peptide chain release factor 1.